The sequence spans 218 residues: Small ribosomal subunit protein uS3c (218 aa).

Residues 47–118 (VQKNIRISSG…KLNIAITRIS (72 aa)) form the KH type-2 domain.

It belongs to the universal ribosomal protein uS3 family. Part of the 30S ribosomal subunit.

It localises to the plastid. Its subcellular location is the chloroplast. The polypeptide is Small ribosomal subunit protein uS3c (rps3) (Barbarea verna (Land cress)).